We begin with the raw amino-acid sequence, 189 residues long: Lipid A acyltransferase PagP (189 aa).

The N-terminal stretch at 1–23 (MRLKLILYFLILSCYLGIGSARA) is a signal peptide. Residues H61, D104, and S105 contribute to the active site.

Belongs to the lipid A palmitoyltransferase family. In terms of assembly, homodimer.

The protein resides in the cell outer membrane. It catalyses the reaction a lipid A + a 1,2-diacyl-sn-glycero-3-phosphocholine = a hepta-acyl lipid A + a 2-acyl-sn-glycero-3-phosphocholine. The enzyme catalyses a lipid IVA + a 1,2-diacyl-sn-glycero-3-phosphocholine = a lipid IVB + a 2-acyl-sn-glycero-3-phosphocholine. It carries out the reaction a lipid IIA + a 1,2-diacyl-sn-glycero-3-phosphocholine = a lipid IIB + a 2-acyl-sn-glycero-3-phosphocholine. Functionally, transfers a fatty acid residue from the sn-1 position of a phospholipid to the N-linked hydroxyfatty acid chain on the proximal unit of lipid A or its precursors. This chain is Lipid A acyltransferase PagP, found in Erwinia tasmaniensis (strain DSM 17950 / CFBP 7177 / CIP 109463 / NCPPB 4357 / Et1/99).